A 141-amino-acid chain; its full sequence is uncharacterized protein (141 aa).

This is an uncharacterized protein from Clostridium pasteurianum.